Here is a 392-residue protein sequence, read N- to C-terminus: L-rhamnonate dehydratase (392 aa).

Positions 22 and 48 each coordinate substrate. Mg(2+)-binding residues include aspartate 214, glutamate 240, and glutamate 268. The active-site Proton acceptor is histidine 318. A substrate-binding site is contributed by glutamate 338.

Belongs to the mandelate racemase/muconate lactonizing enzyme family. RhamD subfamily. As to quaternary structure, homooctamer; tetramer of dimers. Mg(2+) is required as a cofactor.

It catalyses the reaction L-rhamnonate = 2-dehydro-3-deoxy-L-rhamnonate + H2O. In terms of biological role, catalyzes the dehydration of L-rhamnonate to 2-keto-3-deoxy-L-rhamnonate (KDR). This Burkholderia cenocepacia (strain HI2424) protein is L-rhamnonate dehydratase.